A 345-amino-acid polypeptide reads, in one-letter code: KRR1 small subunit processome component homolog (345 aa).

Positions D125 to N193 constitute a KH domain. Residues N232 to K245 are compositionally biased toward basic residues. Disordered stretches follow at residues N232–V260 and Q273–S345. A coiled-coil region spans residues F270–R298. Composition is skewed to basic and acidic residues over residues K276 to D302 and R315 to A330. A compositionally biased stretch (basic residues) spans L331–S345.

Belongs to the KRR1 family. In terms of assembly, monomer. Component of the ribosomal small subunit (SSU) processome.

The protein localises to the nucleus. It localises to the nucleolus. Required for 40S ribosome biogenesis. Involved in nucleolar processing of pre-18S ribosomal RNA and ribosome assembly. Binds to RNA. Required for female germline development, cell viability during eye development and for survival of dividing cells and epithelial cells during early wing disk development. The sequence is that of KRR1 small subunit processome component homolog (dbe) from Drosophila melanogaster (Fruit fly).